Consider the following 101-residue polypeptide: MSVTTIKDPRDVVLAPVVSEKSYGLIDEGKYTFLVDPRSNKTEIKLAVEKIFSVKVDSINTINRAGKRKRTKFGWGQRKSTKRAIVTLKEGTIDIFGGPLA.

Belongs to the universal ribosomal protein uL23 family. In terms of assembly, part of the 50S ribosomal subunit. Contacts protein L29, and trigger factor when it is bound to the ribosome.

One of the early assembly proteins it binds 23S rRNA. One of the proteins that surrounds the polypeptide exit tunnel on the outside of the ribosome. Forms the main docking site for trigger factor binding to the ribosome. This chain is Large ribosomal subunit protein uL23, found in Paenarthrobacter aurescens (strain TC1).